A 233-amino-acid chain; its full sequence is Urease accessory protein UreF (233 aa).

It belongs to the UreF family. In terms of assembly, ureD, UreF and UreG form a complex that acts as a GTP-hydrolysis-dependent molecular chaperone, activating the urease apoprotein by helping to assemble the nickel containing metallocenter of UreC. The UreE protein probably delivers the nickel.

It is found in the cytoplasm. In terms of biological role, required for maturation of urease via the functional incorporation of the urease nickel metallocenter. The sequence is that of Urease accessory protein UreF from Polaromonas sp. (strain JS666 / ATCC BAA-500).